The following is a 617-amino-acid chain: MNTENRSPEQFDIPLFLKNLPKLPGVYRFFDEGGKVLYVGKAVNLKRRVSGYFQKNDHSPRIALMVKQVHHIETTITRSEAEALILENNFIKALSPKYNILFRDDKSYPYLMLSGHQYPQMAYYRGTLKKPNQYFGPYPNSNAVRDSIQILQKVFMLRTCEDSVFEHRDRPCLLYQIKRCTAPCVGHISEEDYRDSVRQAATFLNGKTDELTRTLQHKMQTAAANLQFEEAARYRDQIQALGIMQSNQFIDSKNPNNPNDIDLLALAVSDGLVCVHWVSIRGGRHVGDKSFFPDTKNDPEPNGQDYAEAFVAQHYLGKSKPDIIINNFPVPDALKEALEGEHGKQMQFVTKTIGERKVWLKMAEQNAQMAIAQRRLQQSNQQHRIDELAKILGMDSDGLNRLECFDISHTQGEATIASCVVYDEQNIQPSQYRRYNITTAKPGDDYAAMREVLTRRYGKMQEAEANGETVKWPDAVLIDGGKGQIGIAVSVWEELGLHIPLVGIAKGPERKAGMEELILPFTGEVFRLPPNSPALHLLQTVRDESHRFAITGHRKKRDKARVTSSLSDIPGVGSKRRQALLTRFGGLRGVIAASREDLEKVEGISKALAETIYEHLH.

Residues 22-100 form the GIY-YIG domain; it reads KLPGVYRFFD…IKALSPKYNI (79 aa). Residues 209–244 enclose the UVR domain; the sequence is DELTRTLQHKMQTAAANLQFEEAARYRDQIQALGIM.

This sequence belongs to the UvrC family. Interacts with UvrB in an incision complex.

It localises to the cytoplasm. Its function is as follows. The UvrABC repair system catalyzes the recognition and processing of DNA lesions. UvrC both incises the 5' and 3' sides of the lesion. The N-terminal half is responsible for the 3' incision and the C-terminal half is responsible for the 5' incision. The sequence is that of UvrABC system protein C from Neisseria meningitidis serogroup A / serotype 4A (strain DSM 15465 / Z2491).